Reading from the N-terminus, the 565-residue chain is Urease subunit beta (565 aa).

The Urease domain occupies 130 to 565 (GGIDTHIHFI…LALARKYFMI (436 aa)). Residues His-135, His-137, and Lys-218 each coordinate Ni(2+). Lys-218 carries the N6-carboxylysine modification. Position 220 (His-220) interacts with substrate. Residues His-247 and His-273 each contribute to the Ni(2+) site. His-321 functions as the Proton donor in the catalytic mechanism. Asp-361 provides a ligand contact to Ni(2+).

Belongs to the metallo-dependent hydrolases superfamily. Urease alpha subunit family. In terms of assembly, heterohexamer of 3 UreA (alpha) and 3 UreB (beta) subunits. Requires Ni cation as cofactor. Carboxylation allows a single lysine to coordinate two nickel ions.

It is found in the cytoplasm. The catalysed reaction is urea + 2 H2O + H(+) = hydrogencarbonate + 2 NH4(+). The protein operates within nitrogen metabolism; urea degradation; CO(2) and NH(3) from urea (urease route): step 1/1. In Campylobacter lari, this protein is Urease subunit beta.